Reading from the N-terminus, the 398-residue chain is Acetate kinase (398 aa).

A Mg(2+)-binding site is contributed by Asn9. Lys16 contacts ATP. A substrate-binding site is contributed by Arg93. Asp150 acts as the Proton donor/acceptor in catalysis. ATP contacts are provided by residues 209–213 (HLGAG), 284–286 (DMR), and 329–333 (GIGEH). A Mg(2+)-binding site is contributed by Glu382.

The protein belongs to the acetokinase family. In terms of assembly, homodimer. Requires Mg(2+) as cofactor. The cofactor is Mn(2+).

Its subcellular location is the cytoplasm. It catalyses the reaction acetate + ATP = acetyl phosphate + ADP. It participates in metabolic intermediate biosynthesis; acetyl-CoA biosynthesis; acetyl-CoA from acetate: step 1/2. Functionally, catalyzes the formation of acetyl phosphate from acetate and ATP. Can also catalyze the reverse reaction. The sequence is that of Acetate kinase from Rhodopseudomonas palustris (strain ATCC BAA-98 / CGA009).